A 119-amino-acid chain; its full sequence is uncharacterized protein (119 aa).

The region spanning 1-112 (MVFNMRSTRG…FISSCLLLVL (112 aa)) is the ABC transmembrane type-1 domain. 2 helical membrane-spanning segments follow: residues 51–73 (VLAW…ATRF) and 91–111 (FEIA…LLLV).

This sequence belongs to the binding-protein-dependent transport system permease family. CysTW subfamily.

The protein resides in the cell membrane. This is an uncharacterized protein from Haemophilus influenzae (strain ATCC 51907 / DSM 11121 / KW20 / Rd).